The following is an 806-amino-acid chain: Lon protease 1 (806 aa).

In terms of domain architecture, Lon N-terminal spans 31 to 235 (VPLIAVPSHP…KVLELIYEEL (205 aa)). 389–396 (GPPGVGKT) serves as a coordination point for ATP. The Lon proteolytic domain occupies 626–806 (AMYSGMVMGL…NMREVIKLLF (181 aa)). Active-site residues include Ser714 and Lys757.

It belongs to the peptidase S16 family. Homohexamer. Organized in a ring with a central cavity.

Its subcellular location is the cytoplasm. It carries out the reaction Hydrolysis of proteins in presence of ATP.. In terms of biological role, ATP-dependent serine protease that mediates the selective degradation of mutant and abnormal proteins as well as certain short-lived regulatory proteins. Required for cellular homeostasis and for survival from DNA damage and developmental changes induced by stress. Degrades polypeptides processively to yield small peptide fragments that are 5 to 10 amino acids long. Binds to DNA in a double-stranded, site-specific manner. The sequence is that of Lon protease 1 from Borreliella burgdorferi (strain ATCC 35210 / DSM 4680 / CIP 102532 / B31) (Borrelia burgdorferi).